We begin with the raw amino-acid sequence, 858 residues long: DNA mismatch repair protein MutS (858 aa).

Residue 611–618 (GPNMGGKS) participates in ATP binding.

Belongs to the DNA mismatch repair MutS family.

This protein is involved in the repair of mismatches in DNA. It is possible that it carries out the mismatch recognition step. This protein has a weak ATPase activity. The chain is DNA mismatch repair protein MutS from Actinobacillus succinogenes (strain ATCC 55618 / DSM 22257 / CCUG 43843 / 130Z).